A 252-amino-acid polypeptide reads, in one-letter code: Imidazole glycerol phosphate synthase subunit HisF (252 aa).

Residues Asp11 and Asp130 contribute to the active site.

This sequence belongs to the HisA/HisF family. In terms of assembly, heterodimer of HisH and HisF.

It localises to the cytoplasm. It carries out the reaction 5-[(5-phospho-1-deoxy-D-ribulos-1-ylimino)methylamino]-1-(5-phospho-beta-D-ribosyl)imidazole-4-carboxamide + L-glutamine = D-erythro-1-(imidazol-4-yl)glycerol 3-phosphate + 5-amino-1-(5-phospho-beta-D-ribosyl)imidazole-4-carboxamide + L-glutamate + H(+). The protein operates within amino-acid biosynthesis; L-histidine biosynthesis; L-histidine from 5-phospho-alpha-D-ribose 1-diphosphate: step 5/9. Its function is as follows. IGPS catalyzes the conversion of PRFAR and glutamine to IGP, AICAR and glutamate. The HisF subunit catalyzes the cyclization activity that produces IGP and AICAR from PRFAR using the ammonia provided by the HisH subunit. This is Imidazole glycerol phosphate synthase subunit HisF from Alkaliphilus metalliredigens (strain QYMF).